We begin with the raw amino-acid sequence, 368 residues long: Phospho-N-acetylmuramoyl-pentapeptide-transferase (368 aa).

Helical transmembrane passes span 30-50, 72-92, 99-119, 139-159, 170-190, 201-221, 238-258, 264-286, and 345-365; these read AAAV…IKYL, LPTM…FLWA, VWLI…DDYM, VLLG…SVLL, LTID…TAVS, GLAS…AYLA, GGEI…FLWF, EIIM…ALLI, and KIVI…LMTL.

The protein belongs to the glycosyltransferase 4 family. MraY subfamily. It depends on Mg(2+) as a cofactor.

It localises to the cell inner membrane. The enzyme catalyses UDP-N-acetyl-alpha-D-muramoyl-L-alanyl-gamma-D-glutamyl-meso-2,6-diaminopimeloyl-D-alanyl-D-alanine + di-trans,octa-cis-undecaprenyl phosphate = di-trans,octa-cis-undecaprenyl diphospho-N-acetyl-alpha-D-muramoyl-L-alanyl-D-glutamyl-meso-2,6-diaminopimeloyl-D-alanyl-D-alanine + UMP. Its pathway is cell wall biogenesis; peptidoglycan biosynthesis. Catalyzes the initial step of the lipid cycle reactions in the biosynthesis of the cell wall peptidoglycan: transfers peptidoglycan precursor phospho-MurNAc-pentapeptide from UDP-MurNAc-pentapeptide onto the lipid carrier undecaprenyl phosphate, yielding undecaprenyl-pyrophosphoryl-MurNAc-pentapeptide, known as lipid I. This Chlorobium limicola (strain DSM 245 / NBRC 103803 / 6330) protein is Phospho-N-acetylmuramoyl-pentapeptide-transferase.